The sequence spans 541 residues: MQHKLLFSAIALALSYSAQAVIVPEGTQLDEKQHIVINNGAEPQSFDPHKTEGVPESNVAYQLLEGLVTSDSEGKLQPGAAESWENTPDFKTWTFHLRKDAKWSNGDPVTAHDFVFAWRRLVDPATAAPYASYLSYLQVENAQDIIDGKKKPAELGVEXKDDYTFVVHTTNPVPYTVSXXTHQSLLPLPXKVVEKLGDAWVKKENYVGNGAYKLANHIINEKIEFERNPLYWNDKETVINSATFLAIENPSTDVARYRAGDLDMTSYGLPPEQFAKLQKELPGEVYVTRTLGTYSYELNNKKAPFDNVNIRKALNLSLDRNVITDKVLGQGQTPTYVFTPTYIEEGHLIQQPAYSKEPMAQRNEEAIKLLEEAGYSKANPLKFSILYNTNENHKKVAIAAASMWKANTKGLIDVKLENQEWKTYIDSRRAGRYDVARAGWNADYNQATTFGNYFLSNSSNNTAKYANPEYDKAMAESYAATDAEGRAKAYAKAEEILGKDYGIVPIFNYVNPRLVKPYVKGYSGKDPQDHIYLRNLYIIKH.

An N-terminal signal peptide occupies residues 1–20; the sequence is MQHKLLFSAIALALSYSAQA.

The protein belongs to the bacterial solute-binding protein 5 family. The complex is composed of two ATP-binding proteins (OppD and OppF), two transmembrane proteins (OppB and OppC) and a solute-binding protein (OppA).

It localises to the periplasm. In terms of biological role, part of the ABC transporter complex OppABCDF involved in the uptake of oligopeptides. Plays an important nutritional role. Binds peptides containing from two to five amino acid residues. This chain is Periplasmic oligopeptide-binding protein OppA (oppA), found in Haemophilus influenzae (strain ATCC 51907 / DSM 11121 / KW20 / Rd).